The following is a 239-amino-acid chain: Ribose-5-phosphate isomerase A (239 aa).

Residues 40–43, 96–99, and 110–113 each bind substrate; these read SGST, DGAD, and KGGG. Glutamate 119 acts as the Proton acceptor in catalysis. Substrate is bound at residue lysine 137.

It belongs to the ribose 5-phosphate isomerase family. As to quaternary structure, homodimer.

The catalysed reaction is aldehydo-D-ribose 5-phosphate = D-ribulose 5-phosphate. Its pathway is carbohydrate degradation; pentose phosphate pathway; D-ribose 5-phosphate from D-ribulose 5-phosphate (non-oxidative stage): step 1/1. Catalyzes the reversible conversion of ribose-5-phosphate to ribulose 5-phosphate. The polypeptide is Ribose-5-phosphate isomerase A (Methanococcus maripaludis (strain C5 / ATCC BAA-1333)).